A 133-amino-acid polypeptide reads, in one-letter code: Profilin-4 (133 aa).

Residues Cys13 and Cys117 are joined by a disulfide bond. Positions 83–99 match the Involved in PIP2 interaction motif; it reads AVIRGKKGSGGITIKKT. Thr113 is modified (phosphothreonine).

The protein belongs to the profilin family. Occurs in many kinds of cells as a complex with monomeric actin in a 1:1 ratio. In terms of processing, phosphorylated by MAP kinases.

Its subcellular location is the cytoplasm. The protein resides in the cytoskeleton. Its function is as follows. Binds to actin and affects the structure of the cytoskeleton. At high concentrations, profilin prevents the polymerization of actin, whereas it enhances it at low concentrations. The sequence is that of Profilin-4 from Corylus avellana (European hazel).